The chain runs to 773 residues: Angiomotin-like protein 2 (773 aa).

Disordered stretches follow at residues 41–157 (GGAG…HVRS), 169–238 (RNGA…SPHF), and 259–309 (QYQY…LAQM). Composition is skewed to basic and acidic residues over residues 80 to 91 (QGGETHLAENRL), 100 to 112 (KGEELPTYEEAKA), and 141 to 152 (RRQDEALRELRH). Residues 101–302 (GEELPTYEEA…GPPGAQATSG (202 aa)) form a required for interaction with CDH5 region. The residue at position 107 (Tyr-107) is a Phosphotyrosine; by FGFR1. A compositionally biased stretch (polar residues) spans 177 to 190 (HMSSSHSFPQLARS). Over residues 196-213 (PRGPPAEGPEPRGPPPQY) the composition is skewed to pro residues. The interval 220–302 (QETAAVNDPR…GPPGAQATSG (83 aa)) is required for interaction with CDH1. The stretch at 304–577 (AHLAQMESVL…KYLEERAMRQ (274 aa)) forms a coiled coil. Glycyl lysine isopeptide (Lys-Gly) (interchain with G-Cter in ubiquitin) cross-links involve residues Lys-342 and Lys-403. Disordered regions lie at residues 589 to 611 (QRDTTLIRHSPQPSPSSSFNEGL) and 677 to 754 (WQGF…TTSL). A compositionally biased stretch (pro residues) spans 701–710 (EEPPATPPLP). The segment covering 719 to 734 (DGSTQTDGPADSTSAC) has biased composition (polar residues). Phosphoserine occurs at positions 753 and 756. The short motif at 770 to 773 (EILI) is the PDZ-binding element.

This sequence belongs to the angiomotin family. Part of a complex composed of AMOTL2, MAGI1 and CDH5, within the complex AMOTL2 acts as a scaffold protein for the interaction of MAGI1 with CDH5. The complex is required for coupling actin fibers to cell junctions in endothelial cells. Within the complex AMOTL2 (via its N-terminus) interacts with CDH5. Interacts (via N-terminus) with MAGI1. Interacts (via N-terminus) with ACTB; the interaction facilitates binding of cell junction complexes to actin fibers in endothelial cells. Interacts with CDH1; the interaction may facilitate binding of radial actin fibers to cell junction complexes. Interacts with SRC. Interacts with YAP1; the interaction is required for ubiquitination of AMOTL2 and localization of YAP1 to tight junctions. Interacts with WWP1; the interaction facilitates WWP1 interaction with the Crumbs complex and subsequent WWP1 translocation to the plasma membrane. WWP1 interaction with the Crumbs complex promotes WWP1 monoubiquitination of AMOTL2 which subsequently activates the Hippo signaling pathway. When ubiquitinated interacts with LATS2 (via UBA domain); the interaction promotes LATS2 phosphorylation of YAP1. Interacts (via PPXY motif) with WWTR1/TAZ (via WW domain); the interaction promotes WWTR1/TAZ localization to the cytoplasm and thereby inhibition of its transcriptional properties. Interacts with PHLDB2; interaction may facilitate PHLDB2 localization to the myotube podosome cortex that surrounds the core. Post-translationally, monoubiquitinated at Lys-342 and Lys-403 by Crumbs complex-bound WWP1. De-ubiquitinated at Lys-342 and Lys-403 by USP9X; the interaction may be promoted by cell contact inhibition. Deubiquitination of AMOTL2 negatively regulates Hippo signaling activation. In terms of processing, phosphorylation at Tyr-107 is necessary for efficient binding to SRC and synergistically functioning with SRC to activate the downstream MAPK pathway.

It localises to the recycling endosome. It is found in the cytoplasm. The protein resides in the cell projection. The protein localises to the podosome. Its subcellular location is the cell junction. Functionally, regulates the translocation of phosphorylated SRC to peripheral cell-matrix adhesion sites. Required for proper architecture of actin filaments. Plays a role in coupling actin fibers to cell junctions in endothelial cells and is therefore required for correct endothelial cell morphology via facilitating transcellular transmission of mechanical force resulting in endothelial cell elongation. Required for the anchoring of radial actin fibers to CDH1 junction complexes at the cell membrane which facilitates organization of radial actin fiber structure and cellular response to contractile forces. This contributes to maintenance of cell area, size, shape, epithelial sheet organization and trophectoderm cell properties that facilitate blastocyst zona hatching. Inhibits the Wnt/beta-catenin signaling pathway, probably by recruiting CTNNB1 to recycling endosomes and hence preventing its translocation to the nucleus. Participates in angiogenesis. Activates the Hippo signaling pathway in response to cell contact inhibition via interaction with and ubiquitination by Crumbs complex-bound WWP1. Ubiquitinated AMOTL2 then interacts with LATS2 which in turn phosphorylates YAP1, excluding it from the nucleus and localizing it to the cytoplasm and tight junctions, therefore ultimately repressing YAP1-driven transcription of target genes. Acts to inhibit WWTR1/TAZ transcriptional coactivator activity via sequestering WWTR1/TAZ in the cytoplasm and at tight junctions. Regulates the size and protein composition of the podosome cortex and core at myofibril neuromuscular junctions. Selectively promotes FGF-induced MAPK activation through SRC. May play a role in the polarity, proliferation and migration of endothelial cells. This is Angiomotin-like protein 2 from Rattus norvegicus (Rat).